The following is an 838-amino-acid chain: Leucine--tRNA ligase (838 aa).

Positions 36-46 match the 'HIGH' region motif; sequence PYPSGKIHMGH. The 'KMSKS' region motif lies at 611-615; it reads KMSKS. Residue Lys-614 participates in ATP binding.

The protein belongs to the class-I aminoacyl-tRNA synthetase family.

The protein localises to the cytoplasm. The catalysed reaction is tRNA(Leu) + L-leucine + ATP = L-leucyl-tRNA(Leu) + AMP + diphosphate. This is Leucine--tRNA ligase from Wolbachia sp. subsp. Drosophila simulans (strain wRi).